The sequence spans 59 residues: Large ribosomal subunit protein uL30 (59 aa).

Belongs to the universal ribosomal protein uL30 family. In terms of assembly, part of the 50S ribosomal subunit.

This Alkaliphilus oremlandii (strain OhILAs) (Clostridium oremlandii (strain OhILAs)) protein is Large ribosomal subunit protein uL30.